Consider the following 275-residue polypeptide: Voltage-dependent calcium channel gamma-5 subunit (275 aa).

The next 4 helical transmembrane spans lie at 8–28 (ALTLLSSVFAVCGLGLLGIAV), 103–123 (FPLVSLFFMFIGFILNNIGHI), 129–149 (ILAFVSGIFFILSGLSLVVGL), and 176–196 (GWSFAFAAISFLLTESAGVMS).

It belongs to the PMP-22/EMP/MP20 family. CACNG subfamily. In terms of assembly, the L-type calcium channel is composed of five subunits: alpha-1, alpha-2/delta, beta and gamma. Acts as an auxiliary subunit for AMPA-selective glutamate receptors (AMPARs). Found in a complex with GRIA1, GRIA2, GRIA3, GRIA4, CNIH2, CNIH3, CACNG2, CACNG3, CACNG4, CACNG7 and CACNG8. Interacts with GRIA1, GRIA2, GRIA3 and GRIA4.

The protein localises to the membrane. The protein resides in the postsynaptic density membrane. Functionally, regulates the gating properties of AMPA-selective glutamate receptors (AMPARs). Modulates their gating properties by accelerating their rates of activation, deactivation and desensitization. Displays subunit-specific AMPA receptor regulation. Shows specificity for GRIA1, GRIA4 and the long isoform of GRIA2. Thought to stabilize the calcium channel in an inactivated (closed) state. This is Voltage-dependent calcium channel gamma-5 subunit (CACNG5) from Homo sapiens (Human).